Here is a 416-residue protein sequence, read N- to C-terminus: Protein MID1-COMPLEMENTING ACTIVITY 2 (416 aa).

A coiled-coil region spans residues 191 to 219; the sequence is CEALKTEEEKLQLELQRSRARYDADQCEV. Residues 338–354 form a helical membrane-spanning segment; the sequence is LIVYSLILSCCCYTCCI.

In terms of tissue distribution, expressed in roots, leaves, stems, flowers and siliques. In the root, high levels of expression in vascular tissues, in the stele and endodermis, but no expression in the cortex, epidermis, root cap, promeristem and adjacent elongation zone of the primary root. Not expressed in root hairs. Detected in shoot apical meristem, leaf mesophyll cells and vascular tissues, upper half of inflorescence, but not in petioles of rosette leaves.

Its subcellular location is the cell membrane. Its activity is regulated as follows. Inhibited by GdCl(3), but not by verapamil. In terms of biological role, calcium-permeable stretch-activated channel component. Probably involved in mechanosensing and in mechano-stimulated calcium uptake mechanism. The protein is Protein MID1-COMPLEMENTING ACTIVITY 2 (MCA2) of Arabidopsis thaliana (Mouse-ear cress).